The sequence spans 355 residues: Peptide chain release factor 1 (355 aa).

Q231 carries the post-translational modification N5-methylglutamine.

This sequence belongs to the prokaryotic/mitochondrial release factor family. Post-translationally, methylated by PrmC. Methylation increases the termination efficiency of RF1.

The protein localises to the cytoplasm. Its function is as follows. Peptide chain release factor 1 directs the termination of translation in response to the peptide chain termination codons UAG and UAA. The protein is Peptide chain release factor 1 of Sulfurovum sp. (strain NBC37-1).